Here is a 582-residue protein sequence, read N- to C-terminus: MQYSHHCEHLLERLNKQREAGFLCDCTIVIGEFQFKAHRNVLASFSEYFGAIYRSTSENNVFLDQSQVKADGFQKLLEFIYTGTLNLDSWNVKEIHQAADYLKVEEVVTKCKIKMEDFAFIANPSSTEISSITGNIELNQQTCLLTLRDYNNREKSEVSTDLIQANPKQGALAKKSSQTKKKKKAFNSPKTGQNKTVQYPSDILENASVDLFLDANKLPTPVVEQVAQINDNSELELTSVVENTFPAQDIVHTVTVKRKRGKSQPNCALKEHSMSNIASIKSPYEAENSGEELDQRYSKAKPMCNTRGKVFSEASSLRRHMRIHKGVKPYVCHLCGKAFTQCNQLKTHVRTHTGEKPYKCELCDKGFAQKCQLVFHSRMHHGEEKPYKCDVCNLQFATSSNLKIHARKHSGEKPYVCDRCGQRFAQASTLTYHVRRHTGEKPYVCDTCGKAFAVSSSLITHSRKHTGERPFICELCGNSYTDIKNLKKHKTKVHSGADKTPDSSAEDHTLSEQDSIQKSPLSETMDVKPSDTTLPLALPLGTEDHHMLLPVTDTQSPTSDTLLRSTVNGYSEPQLIFLQQLY.

Residues 24–89 (CDCTIVIGEF…IYTGTLNLDS (66 aa)) enclose the BTB domain. A disordered region spans residues 169-197 (QGALAKKSSQTKKKKKAFNSPKTGQNKTV). 2 short sequence motifs (nuclear localization signal) span residues 174–190 (KKSS…NSPK) and 257–262 (KRKRGK). Residues 188–197 (SPKTGQNKTV) show a composition bias toward polar residues. S289 is modified (phosphoserine). The C2H2-type 1; degenerate zinc-finger motif lies at 302-324 (PMCNTRGKVFSEASSLRRHMRIH). 6 consecutive C2H2-type zinc fingers follow at residues 330–352 (YVCH…VRTH), 358–381 (YKCE…RMHH), 387–409 (YKCD…ARKH), 415–437 (YVCD…VRRH), 443–465 (YVCD…SRKH), and 471–494 (FICE…TKVH). The segment at 489–538 (HKTKVHSGADKTPDSSAEDHTLSEQDSIQKSPLSETMDVKPSDTTLPLAL) is disordered. Residues 495-511 (SGADKTPDSSAEDHTLS) are compositionally biased toward basic and acidic residues. A compositionally biased stretch (polar residues) spans 512 to 522 (EQDSIQKSPLS).

This sequence belongs to the krueppel C2H2-type zinc-finger protein family.

It is found in the nucleus. The protein is Myoneurin (MYNN) of Pongo abelii (Sumatran orangutan).